The primary structure comprises 164 residues: Cyclic pyranopterin monophosphate synthase (164 aa).

Substrate is bound by residues 75–77 (MAH) and 112–113 (ME). The active site involves D127.

Belongs to the MoaC family. Homohexamer; trimer of dimers.

It carries out the reaction (8S)-3',8-cyclo-7,8-dihydroguanosine 5'-triphosphate = cyclic pyranopterin phosphate + diphosphate. It participates in cofactor biosynthesis; molybdopterin biosynthesis. Catalyzes the conversion of (8S)-3',8-cyclo-7,8-dihydroguanosine 5'-triphosphate to cyclic pyranopterin monophosphate (cPMP). The sequence is that of Cyclic pyranopterin monophosphate synthase from Desulforamulus reducens (strain ATCC BAA-1160 / DSM 100696 / MI-1) (Desulfotomaculum reducens).